Consider the following 258-residue polypeptide: Type III pantothenate kinase (258 aa).

ATP is bound at residue 6-13 (DVGNTNTV). Substrate is bound by residues Y100 and 107 to 110 (GADR). The active-site Proton acceptor is the D109. D129 contacts K(+). Residue T132 participates in ATP binding. T184 is a binding site for substrate.

This sequence belongs to the type III pantothenate kinase family. In terms of assembly, homodimer. It depends on NH4(+) as a cofactor. K(+) serves as cofactor.

Its subcellular location is the cytoplasm. It carries out the reaction (R)-pantothenate + ATP = (R)-4'-phosphopantothenate + ADP + H(+). It functions in the pathway cofactor biosynthesis; coenzyme A biosynthesis; CoA from (R)-pantothenate: step 1/5. In terms of biological role, catalyzes the phosphorylation of pantothenate (Pan), the first step in CoA biosynthesis. This is Type III pantothenate kinase from Geobacillus sp. (strain WCH70).